The chain runs to 61 residues: Small ribosomal subunit protein uS14 (61 aa).

Zn(2+) contacts are provided by Cys24, Cys27, Cys40, and Cys43.

Belongs to the universal ribosomal protein uS14 family. Zinc-binding uS14 subfamily. In terms of assembly, part of the 30S ribosomal subunit. Contacts proteins S3 and S10. Zn(2+) serves as cofactor.

Binds 16S rRNA, required for the assembly of 30S particles and may also be responsible for determining the conformation of the 16S rRNA at the A site. This Thermotoga neapolitana (strain ATCC 49049 / DSM 4359 / NBRC 107923 / NS-E) protein is Small ribosomal subunit protein uS14.